The sequence spans 492 residues: 2,3-bisphosphoglycerate-independent phosphoglycerate mutase (492 aa).

Asp11 and Ser61 together coordinate Mn(2+). The active-site Phosphoserine intermediate is Ser61. Substrate is bound by residues His118, 147–148 (RD), Arg177, Arg183, 248–251 (RNDR), and Lys321. Mn(2+) is bound by residues Asp387, His391, Asp428, His429, and His446.

Belongs to the BPG-independent phosphoglycerate mutase family. In terms of assembly, monomer. Mn(2+) serves as cofactor.

It catalyses the reaction (2R)-2-phosphoglycerate = (2R)-3-phosphoglycerate. The protein operates within carbohydrate degradation; glycolysis; pyruvate from D-glyceraldehyde 3-phosphate: step 3/5. Its function is as follows. Catalyzes the interconversion of 2-phosphoglycerate and 3-phosphoglycerate. In Helicobacter acinonychis (strain Sheeba), this protein is 2,3-bisphosphoglycerate-independent phosphoglycerate mutase.